A 196-amino-acid polypeptide reads, in one-letter code: Adenylate kinase (196 aa).

9–17 contacts ATP; it reads GIPGVGKST.

Belongs to the archaeal adenylate kinase family.

The protein localises to the cytoplasm. The enzyme catalyses AMP + ATP = 2 ADP. This chain is Adenylate kinase, found in Thermococcus sibiricus (strain DSM 12597 / MM 739).